Here is a 273-residue protein sequence, read N- to C-terminus: Putative phosphoenolpyruvate synthase regulatory protein (273 aa).

153–160 (GVSRSGKT) lines the ADP pocket.

The protein belongs to the pyruvate, phosphate/water dikinase regulatory protein family. PSRP subfamily.

The enzyme catalyses [pyruvate, water dikinase] + ADP = [pyruvate, water dikinase]-phosphate + AMP + H(+). It catalyses the reaction [pyruvate, water dikinase]-phosphate + phosphate + H(+) = [pyruvate, water dikinase] + diphosphate. In terms of biological role, bifunctional serine/threonine kinase and phosphorylase involved in the regulation of the phosphoenolpyruvate synthase (PEPS) by catalyzing its phosphorylation/dephosphorylation. This Polaromonas sp. (strain JS666 / ATCC BAA-500) protein is Putative phosphoenolpyruvate synthase regulatory protein.